Consider the following 274-residue polypeptide: Diaminopimelate epimerase (274 aa).

The substrate site is built by N11, Q44, and N64. C73 functions as the Proton donor in the catalytic mechanism. Residues 74-75, N157, N190, and 208-209 each bind substrate; these read GN and ER. C217 acts as the Proton acceptor in catalysis. 218-219 is a binding site for substrate; that stretch reads GS.

This sequence belongs to the diaminopimelate epimerase family. As to quaternary structure, homodimer.

The protein resides in the cytoplasm. The catalysed reaction is (2S,6S)-2,6-diaminopimelate = meso-2,6-diaminopimelate. The protein operates within amino-acid biosynthesis; L-lysine biosynthesis via DAP pathway; DL-2,6-diaminopimelate from LL-2,6-diaminopimelate: step 1/1. Functionally, catalyzes the stereoinversion of LL-2,6-diaminopimelate (L,L-DAP) to meso-diaminopimelate (meso-DAP), a precursor of L-lysine and an essential component of the bacterial peptidoglycan. This is Diaminopimelate epimerase from Actinobacillus pleuropneumoniae serotype 3 (strain JL03).